The chain runs to 362 residues: Glutaminase-asparaginase (362 aa).

An N-terminal signal peptide occupies residues 1 to 25; it reads MKPLLHAFAPGVMALMLLLPQAAQA. The 328-residue stretch at 35-362 folds into the Asparaginase/glutaminase domain; that stretch reads SNVVILATGG…KELQRIFWEY (328 aa). Thr45 (acyl-ester intermediate) is an active-site residue. Residues Ser92 and 125–126 contribute to the substrate site; that span reads TD.

This sequence belongs to the asparaginase 1 family. As to quaternary structure, homotetramer.

Its subcellular location is the periplasm. It carries out the reaction L-glutamine + H2O = L-glutamate + NH4(+). It catalyses the reaction L-asparagine + H2O = L-aspartate + NH4(+). The protein is Glutaminase-asparaginase (ansB) of Pseudomonas aeruginosa (strain ATCC 15692 / DSM 22644 / CIP 104116 / JCM 14847 / LMG 12228 / 1C / PRS 101 / PAO1).